A 101-amino-acid polypeptide reads, in one-letter code: MAKQSMKARDVKRVKLAEKFYAKRAELKQIISDVNASDEDRWNAVLKLQTLPRDSSPSRQRNRCRQTGRPHGVLRKFGLSRIKVREAAMRGEIPGLKKASW.

The protein belongs to the universal ribosomal protein uS14 family. Part of the 30S ribosomal subunit. Contacts proteins S3 and S10.

In terms of biological role, binds 16S rRNA, required for the assembly of 30S particles and may also be responsible for determining the conformation of the 16S rRNA at the A site. This is Small ribosomal subunit protein uS14 from Pasteurella multocida (strain Pm70).